We begin with the raw amino-acid sequence, 446 residues long: Phosphoglucosamine mutase (446 aa).

Serine 101 serves as the catalytic Phosphoserine intermediate. Residues serine 101, aspartate 240, aspartate 242, and aspartate 244 each coordinate Mg(2+). The residue at position 101 (serine 101) is a Phosphoserine.

Belongs to the phosphohexose mutase family. Mg(2+) is required as a cofactor. In terms of processing, activated by phosphorylation.

The catalysed reaction is alpha-D-glucosamine 1-phosphate = D-glucosamine 6-phosphate. Its function is as follows. Catalyzes the conversion of glucosamine-6-phosphate to glucosamine-1-phosphate. This is Phosphoglucosamine mutase from Pseudomonas putida (strain ATCC 700007 / DSM 6899 / JCM 31910 / BCRC 17059 / LMG 24140 / F1).